A 721-amino-acid polypeptide reads, in one-letter code: Vacuolar transporter chaperone complex subunit 4 (721 aa).

The region spanning 1 to 146 (MKFGQLLKET…GWILKPVFAA (146 aa)) is the SPX domain. The Cytoplasmic portion of the chain corresponds to 1–631 (MKFGQLLKET…KTYFALERTY (631 aa)). ATP-binding residues include Lys198, Arg262, Arg264, Lys279, Lys292, Tyr357, and Arg359. Glu421 is a binding site for Mn(2+). Lys453 is an active-site residue. 2 stretches are compositionally biased toward polar residues: residues 490-513 (QGRS…SENT) and 529-547 (IGSS…SDSF). The disordered stretch occupies residues 490 to 547 (QGRSQSGTHSSSVSANVLTDSENTPIHADGDNYVDEESRIGSSSTRNDNSTFQTSDSF). Ser495 carries the phosphoserine modification. Thr497 carries the post-translational modification Phosphothreonine. Ser501 carries the post-translational modification Phosphoserine. At Thr534 the chain carries Phosphothreonine. Ser546 carries the post-translational modification Phosphoserine. The helical transmembrane segment at 632–652 (LDYLRYSILMGSIGITLFSFA) threads the bilayer. Residues 653-657 (KTRSG) are Vacuolar-facing. Residues 658–678 (ILGAASFTLVALFAIFYSTFL) form a helical membrane-spanning segment. The Cytoplasmic portion of the chain corresponds to 679–697 (YLWRAVNIAKHNAVRYDDR). A helical membrane pass occupies residues 698–718 (FGPTAICVITFAAISANVILN). At 719–721 (FNA) the chain is on the vacuolar side.

Belongs to the VTC4 family. The VTC core complex is an integral membrane heterooligomer composed of at least the catalytic subunit vtc4 and the accessory subunits vtc1 and vtc2. vtc1 is a small membrane protein without hydrophilic domain. Vtc2 and vtc4 are related and have 2 hydrophilic domains that face the cytosol, an N-terminal SPX domain and the central core domain. The central core in vtc4 is the catalytic domain. Mn(2+) serves as cofactor.

It localises to the vacuole membrane. The catalysed reaction is [phosphate](n) + ATP = [phosphate](n+1) + ADP. With respect to regulation, activity of the enzyme is Mn(2+)-dependent and enhanced in the presence of pyrophosphate (PPi). In terms of biological role, catalytic subunit of the vacuolar transporter chaperone (VTC) complex. The VTC complex acts as a vacuolar polyphosphate polymerase that catalyzes the synthesis of inorganic polyphosphate (polyP) via transfer of phosphate from ATP to a growing polyP chain, releasing ADP. VTC exposes its catalytic domain vtc4 to the cytosol, where the growing polyP chain winds through a tunnel-shaped pocket, integrating cytoplasmic polymer synthesis with polyP membrane translocation. The VTC complex carries 9 vacuolar transmembrane domains, which are likely to constitute the translocation channel into the organelle lumen. PolyP synthesis is tightly coupled to its transport into the vacuole lumen, in order to avoid otherwise toxic intermediates in the cytosol, and it depends on the proton gradient across the membrane, formed by V-ATPase. The VTC complex also plays a role in vacuolar membrane fusion. This Schizosaccharomyces pombe (strain 972 / ATCC 24843) (Fission yeast) protein is Vacuolar transporter chaperone complex subunit 4 (vtc4).